The chain runs to 617 residues: tRNA-dihydrouridine(47) synthase [NAD(P)(+)] (617 aa).

The C3H1-type zinc-finger motif lies at 42–70; the sequence is KENNALCPAISIGNECPYKENCKFPHDVE. The tract at residues 160–193 is disordered; the sequence is EEKPDPSSKVSNIPEENRDATSAISEGKETESVS. FMN is bound by residues 245-247 and Gln-308; that span reads PLT. Cys-340 serves as the catalytic Proton donor. FMN contacts are provided by residues Lys-380, His-411, 460-462, and 483-484; these read NGD and AR.

This sequence belongs to the Dus family. Dus3 subfamily. Requires FMN as cofactor.

The protein localises to the cytoplasm. The protein resides in the nucleus. The catalysed reaction is 5,6-dihydrouridine(47) in tRNA + NAD(+) = uridine(47) in tRNA + NADH + H(+). It catalyses the reaction 5,6-dihydrouridine(47) in tRNA + NADP(+) = uridine(47) in tRNA + NADPH + H(+). It carries out the reaction a 5,6-dihydrouridine in mRNA + NAD(+) = a uridine in mRNA + NADH + H(+). The enzyme catalyses a 5,6-dihydrouridine in mRNA + NADP(+) = a uridine in mRNA + NADPH + H(+). Its function is as follows. Catalyzes the synthesis of dihydrouridine, a modified base, in various RNAs, such as tRNAs and mRNAs. Modifies the uridine in position 47 (U47) in the D-loop of tRNAs. Also able to mediate formation of dihydrouridine outside of the D-loop of tRNAs. Catalyzes the synthesis of dihydrouridine in some mRNAs, thereby affecting their translation. Dus3-mediated dihydrouridylation of the mRNA encoding alpha-tubulin nda2 is required for meiotic chromosome segregation. The chain is tRNA-dihydrouridine(47) synthase [NAD(P)(+)] from Schizosaccharomyces pombe (strain 972 / ATCC 24843) (Fission yeast).